Reading from the N-terminus, the 899-residue chain is Putative lipoxygenase 5 (899 aa).

3 disordered regions span residues 15–34 (AGSR…RSTA), 48–68 (APVE…SVAA), and 258–291 (VASA…SAES). Residues 68–204 (ARAVVTVRRR…VSRDRRVFFS (137 aa)) enclose the PLAT domain. Positions 207–899 (PYLPSETPPG…CRGVPNSVTI (693 aa)) constitute a Lipoxygenase domain. Residues His-559, His-564, His-751, Asn-755, and Ile-899 each contribute to the Fe cation site.

It belongs to the lipoxygenase family. Fe cation serves as cofactor.

The enzyme catalyses (9Z,12Z)-octadecadienoate + O2 = (13S)-hydroperoxy-(9Z,11E)-octadecadienoate. It carries out the reaction (9Z,12Z,15Z)-octadecatrienoate + O2 = (13S)-hydroperoxy-(9Z,11E,15Z)-octadecatrienoate. The protein operates within lipid metabolism; oxylipin biosynthesis. Functionally, plant lipoxygenase may be involved in a number of diverse aspects of plant physiology including growth and development, pest resistance, and senescence or responses to wounding. Catalyzes the hydroperoxidation of lipids containing a cis,cis-1,4-pentadiene structure. The protein is Putative lipoxygenase 5 of Oryza sativa subsp. japonica (Rice).